The primary structure comprises 354 residues: DNA polymerase IV (354 aa).

Residues 14–198 (IIHIDMDAFF…MDIAKFHGVG (185 aa)) form the UmuC domain. Mg(2+) is bound by residues Asp-18 and Asp-116. Glu-117 is an active-site residue.

The protein belongs to the DNA polymerase type-Y family. As to quaternary structure, monomer. Mg(2+) is required as a cofactor.

The protein resides in the cytoplasm. It catalyses the reaction DNA(n) + a 2'-deoxyribonucleoside 5'-triphosphate = DNA(n+1) + diphosphate. Functionally, poorly processive, error-prone DNA polymerase involved in untargeted mutagenesis. Copies undamaged DNA at stalled replication forks, which arise in vivo from mismatched or misaligned primer ends. These misaligned primers can be extended by PolIV. Exhibits no 3'-5' exonuclease (proofreading) activity. May be involved in translesional synthesis, in conjunction with the beta clamp from PolIII. The chain is DNA polymerase IV from Streptococcus gordonii (strain Challis / ATCC 35105 / BCRC 15272 / CH1 / DL1 / V288).